We begin with the raw amino-acid sequence, 184 residues long: Elongation factor P (184 aa).

Belongs to the elongation factor P family.

The protein resides in the cytoplasm. Its pathway is protein biosynthesis; polypeptide chain elongation. Involved in peptide bond synthesis. Stimulates efficient translation and peptide-bond synthesis on native or reconstituted 70S ribosomes in vitro. Probably functions indirectly by altering the affinity of the ribosome for aminoacyl-tRNA, thus increasing their reactivity as acceptors for peptidyl transferase. In Paracidovorax citrulli (strain AAC00-1) (Acidovorax citrulli), this protein is Elongation factor P.